Consider the following 418-residue polypeptide: Homocitrate synthase, mitochondrial (418 aa).

The segment covering 1–10 (MSVSEANGTE) has biased composition (polar residues). The disordered stretch occupies residues 1–25 (MSVSEANGTETIKPPMNGNPYGPNP). Positions 14–25 (PPMNGNPYGPNP) are enriched in low complexity. The 254-residue stretch at 35–288 (FSIIESTLRE…THKYKLNQLR (254 aa)) folds into the Pyruvate carboxyltransferase domain. Residues R43, E44, and H103 each coordinate 2-oxoglutarate. E44 lines the L-lysine pocket. E44 provides a ligand contact to Zn(2+). L-lysine is bound at residue D123. Residues R163, S165, T197, H224, and H226 each contribute to the 2-oxoglutarate site. T197 contacts L-lysine. The Zn(2+) site is built by H224 and H226. Catalysis depends on H321, which acts as the Proton acceptor.

The protein belongs to the alpha-IPM synthase/homocitrate synthase family. Homocitrate synthase LYS20/LYS21 subfamily. It depends on Mg(2+) as a cofactor. Mn(2+) is required as a cofactor. The cofactor is Zn(2+). Requires Co(2+) as cofactor.

Its subcellular location is the mitochondrion. It carries out the reaction acetyl-CoA + 2-oxoglutarate + H2O = (2R)-homocitrate + CoA + H(+). It participates in amino-acid biosynthesis; L-lysine biosynthesis via AAA pathway; L-alpha-aminoadipate from 2-oxoglutarate: step 1/5. The activity is controled by feedback inhibition by L-lysine, the final product of the pathway that acts as a competitive inhibitor of 2-oxoglutarate. Functionally, catalyzes the aldol-type condensation of 2-oxoglutarate with acetyl-CoA to yield homocitrate, the first step of the alpha-aminoadipate (AAA) lysine biosynthesis pathway. The polypeptide is Homocitrate synthase, mitochondrial (Schizosaccharomyces pombe (strain 972 / ATCC 24843) (Fission yeast)).